Reading from the N-terminus, the 4328-residue chain is Cadherin-4 (4328 aa).

The N-terminal stretch at 1 to 23 (MKKHRVFHLFLLIFCKAISLVTT) is a signal peptide. Residues 24-4072 (SSSTEQIFEF…TVLEFLLKAE (4049 aa)) are Extracellular-facing. Residues Asn39 and Asn56 are each glycosylated (N-linked (GlcNAc...) asparagine). 2 consecutive Cadherin domains span residues 108-153 (PLNR…SPVF) and 156-275 (GEQG…NPNI). Residues Asn196, Asn330, Asn339, Asn365, Asn431, Asn452, and Asn584 are each glycosylated (N-linked (GlcNAc...) asparagine). 11 Cadherin domains span residues 384–492 (DNEK…APVF), 507–608 (PGDV…SPVF), 609–720 (SSFP…SPQF), 721–826 (DEVS…PPKC), 827–934 (VVQH…AIEF), 935–1051 (DDVA…KPMY), 1047–1156 (KKPM…SPTF), 1175–1262 (RIFA…PPEI), 1265–1363 (KKSD…RPKF), 1364–1467 (SASH…SPYF), and 1476–1570 (VDES…APET). N-linked (GlcNAc...) asparagine glycans are attached at residues Asn811 and Asn899. A Cell attachment site motif is present at residues 1090–1092 (RGD). N-linked (GlcNAc...) asparagine glycosylation is present at Asn1192. A disordered region spans residues 1246–1267 (NSAGQKPRKSKNSPPEISGKKS). N-linked (GlcNAc...) asparagine glycosylation occurs at Asn1335. Asn1610 carries N-linked (GlcNAc...) asparagine glycosylation. Positions 1671–1784 (RRQVYRGTIR…IDENDEPPRF (114 aa)) constitute a Cadherin 14 domain. Asn1895 carries N-linked (GlcNAc...) asparagine glycosylation. Positions 1917–1984 (FSIVNPHEAF…ENINDETPIF (68 aa)) constitute a Cadherin 15 domain. N-linked (GlcNAc...) asparagine glycans are attached at residues Asn2059, Asn2150, Asn2216, Asn2367, Asn2413, Asn2440, and Asn2535. Cadherin domains follow at residues 2187–2285 (EKLK…MPEF) and 2286–2397 (IRSD…PPRF). 9 consecutive Cadherin domains span residues 2429 to 2505 (LQFS…PPFF), 2506 to 2608 (VLPF…VPRF), 2609 to 2712 (SNSH…APAF), 2719 to 2813 (FTIS…PPQF), 2828 to 2915 (SPIL…CPEA), 2913 to 3011 (PEAN…RPKI), 3012 to 3113 (IEKL…APTF), 3114 to 3216 (EKST…APKF), and 3217 to 3326 (EKEK…APTF). 5 N-linked (GlcNAc...) asparagine glycosylation sites follow: Asn2844, Asn2916, Asn2941, Asn3083, and Asn3143. The N-linked (GlcNAc...) asparagine glycan is linked to Asn3330. Cadherin domains follow at residues 3335–3428 (VQEG…APTM) and 3429–3554 (KPMK…VDEF). Asn3512 carries N-linked (GlcNAc...) asparagine glycosylation. The 39-residue stretch at 3706-3744 (ETNQCAKSPCEQWQLCIPSVHNSTYECVCPLGMEGDKCS) folds into the EGF-like 1 domain. Cystine bridges form between Cys3710–Cys3721, Cys3715–Cys3732, Cys3734–Cys3743, Cys3898–Cys3925, Cys3933–Cys3944, Cys3938–Cys3954, Cys3956–Cys3965, Cys3972–Cys3983, Cys3977–Cys3992, and Cys3994–Cys4003. Asn3727 carries N-linked (GlcNAc...) asparagine glycosylation. A Laminin G-like domain is found at 3757 to 3925 (EAELSVGGDG…MKLFGAQPGC (169 aa)). EGF-like domains lie at 3929-3966 (TSSPCNDLPCQHAGTCISQGKSHFKCECPSRYSGNVCE) and 3968-4004 (DLEPCASSPCPTGIQCIPFYNDYLCKCPNGFTGKHCE). An N-linked (GlcNAc...) asparagine glycan is attached at Asn4043. Residues 4073–4093 (IVIVILGVLLLLLVFCLTFIT) form a helical membrane-spanning segment. The Cytoplasmic portion of the chain corresponds to 4094–4328 (WKCCKKNRDP…IDEEVNIHIS (235 aa)). Disordered stretches follow at residues 4143–4215 (TSSV…SSLR) and 4268–4311 (NFER…PISL). A compositionally biased stretch (basic and acidic residues) spans 4178-4196 (TRRDPLPSDKFRRVDETAN). Positions 4207–4209 (RGD) match the Cell attachment site motif.

As to expression, in larvae and adult, it is expressed in various tissues including pharyngeal muscle, hypodermis and gonad. In the nervous system it is expressed in sensory neurons and motor neurons in the ventral cord.

The protein resides in the cell membrane. In terms of biological role, potential calcium-dependent cell-adhesion protein that controls axon guidance in the ventral cord. This Caenorhabditis elegans protein is Cadherin-4.